The chain runs to 880 residues: MMLKFIKSIFKTPSDRIIANLKSKIQQVHSAESSLAKLSNIELRNKTSEFKARLANNEPIDNIQYEAFAVVREAAKRTIGIQHYDEQLIGGILLHQGKVIEMSTGEGKTLVATLPSYLNALMGKGVHVVTVNDYLAQRDSDWMGTIHRFLDITVGCITSNTNEHARKIAYNSDITYITNNELGFDFLRDNMQFTNQSKVQRGCNYAIIDEIDSILIDEARTPLIISGPVSDNTSLYPIINKLITKLNKDDYEMDEKLRNVTLTDLGINKLETMLAEINILAPNSNSLYDFENMHLIHYINQSLKAHTLFRRNVDYLVKNGKVIIIDEFTGRTMDSRRYSEGLHQALEAKEKVEIQNENQTLASITFQNYFRMYTKLSGMTGTAMTEATELKEIYDLDVVTVPTHNPVQRIDYDDEIYSTKKDKYSAIIQLIQECYSKGQPVLVGTVSIEKSEELSKLLHSKKIPHNVLNAKHHDKEASIIAQAGRIKAITIATNMAGRGTDIMLGGNAEMLVDQSNLTEEEYQEKLKITKMQIEQEKEQVINAGGLFVIGTERHESRRIDNQLRGRCGRQGDPGQTKFFLSLEDDLMRIFASDRVTNILRTIGLKDGEAIHHPLINRSLATAQQKIEAQNYEIRKNLLKYDNVMNDQRKVIYEQRNEAISSDNVNEILHNLTEELIVETVHKFIPPKSYKEDWNIHGLVKEYHHIFNVKLQLDSIEATDSSLKVIEYLTKTAFDIYKQQEQDYSAKSANEAIKHIFIKTLDQTWKEHLYTLDHLKQGISLRAYGQKDPLNEYKREAFDLFKQMLLHLKYLFIQRVARLHIDLASSPKSTSSLLETSDNNLKSKIITENSMAHKYFGKISRNQLCPCNSGKKFKHCHGALK.

Residues Q87, 105-109 (GEGKT), and D501 each bind ATP. Zn(2+) contacts are provided by C864, C866, C875, and H876.

This sequence belongs to the SecA family. In terms of assembly, monomer and homodimer. Part of the essential Sec protein translocation apparatus which comprises SecA, SecYEG and auxiliary proteins SecDF-YajC and YidC. Requires Zn(2+) as cofactor.

It is found in the cell inner membrane. It localises to the cytoplasm. The enzyme catalyses ATP + H2O + cellular proteinSide 1 = ADP + phosphate + cellular proteinSide 2.. Its function is as follows. Part of the Sec protein translocase complex. Interacts with the SecYEG preprotein conducting channel. Has a central role in coupling the hydrolysis of ATP to the transfer of proteins into and across the cell membrane, serving both as a receptor for the preprotein-SecB complex and as an ATP-driven molecular motor driving the stepwise translocation of polypeptide chains across the membrane. This chain is Protein translocase subunit SecA, found in Orientia tsutsugamushi (strain Boryong) (Rickettsia tsutsugamushi).